Consider the following 144-residue polypeptide: Large ribosomal subunit protein uL15 (144 aa).

Residues 1-57 (MLLNTLSPAAGSKHAPKRLGRGVGSGLGKTGGRGHKGQKSRSGGKVRPGFEGGQMPL) are disordered. Over residues 21 to 31 (RGVGSGLGKTG) the composition is skewed to gly residues. The span at 32-44 (GRGHKGQKSRSGG) shows a compositional bias: basic residues.

This sequence belongs to the universal ribosomal protein uL15 family. As to quaternary structure, part of the 50S ribosomal subunit.

Functionally, binds to the 23S rRNA. The sequence is that of Large ribosomal subunit protein uL15 from Vibrio cholerae serotype O1 (strain ATCC 39541 / Classical Ogawa 395 / O395).